Reading from the N-terminus, the 277-residue chain is Undecaprenyl-diphosphatase (277 aa).

A run of 7 helical transmembrane segments spans residues 3–23 (IALLIKAAIMGVVEGLTEFLP), 44–64 (AKVFDIAIQTGAIFAVILVYW), 82–102 (QFALNVLVAFVPAVVLGLLFG), 109–129 (LFTPVVVASTFVIGGFIILWA), 188–208 (ATDFSFYLAIPTLIGAGVYSL), 218–238 (ADVPLFMVGLVFSFVSAWLCI), and 249–269 (SFIPFAWYRIAFGVVVLATAW).

This sequence belongs to the UppP family.

It localises to the cell inner membrane. The enzyme catalyses di-trans,octa-cis-undecaprenyl diphosphate + H2O = di-trans,octa-cis-undecaprenyl phosphate + phosphate + H(+). Functionally, catalyzes the dephosphorylation of undecaprenyl diphosphate (UPP). Confers resistance to bacitracin. In Polaromonas sp. (strain JS666 / ATCC BAA-500), this protein is Undecaprenyl-diphosphatase.